The chain runs to 432 residues: Guanine/hypoxanthine permease PbuO (432 aa).

The next 10 membrane-spanning stretches (helical) occupy residues 15 to 35, 51 to 71, 92 to 112, 133 to 153, 174 to 194, 196 to 216, 234 to 254, 340 to 360, 379 to 399, and 412 to 432; these read IIAG…NPVI, IIAS…PIAI, GITY…FIIL, ITTG…GIVA, LVGL…ALFI, MAAT…KGFM, FGDV…LVTI, ALSG…SLMM, LVIL…LGFI, and REIH…LFIL.

It belongs to the nucleobase:cation symporter-2 (NCS2) (TC 2.A.40) family. Azg-like subfamily.

It localises to the cell membrane. Involved in the uptake of the purine bases hypoxanthine and guanine. May work at purine concentrations higher than 100 uM. This chain is Guanine/hypoxanthine permease PbuO (pbuO), found in Bacillus subtilis (strain 168).